Reading from the N-terminus, the 294-residue chain is RAB7A-interacting MON1-CCZ1 complex subunit 1 (294 aa).

Residue Ala-2 is modified to N-acetylalanine.

This sequence belongs to the RIMOC1 family. Interacts with the MON1A-CCZ1B complex. Interacts with GDP-bound RAB7A and promotes its interaction with the MON1A-CCZ1B complex.

Its subcellular location is the cytoplasm. It is found in the cytosol. In terms of biological role, plays an important role in the removal of damaged mitochondria via mitophagy by controlling the stability and localization of RAB7A. Required for the recruitment of RAB7A and ATG9A vesicles to damaged mitochondria and promotes the stability of RAB7A by inhibiting its proteasomal degradation during mitophagy. The polypeptide is RAB7A-interacting MON1-CCZ1 complex subunit 1 (Homo sapiens (Human)).